Here is a 410-residue protein sequence, read N- to C-terminus: Protein CNPPD1 (410 aa).

The chain crosses the membrane as a helical span at residues C233–I253.

The protein belongs to the CNPPD1 family.

It is found in the membrane. The sequence is that of Protein CNPPD1 (CNPPD1) from Pongo abelii (Sumatran orangutan).